The sequence spans 510 residues: Fumarate hydratase, mitochondrial (510 aa).

Residues 1–44 (MYRALWLLARSRRLVRPPASALASAPGLSGAAVPSFWPPNAARM) constitute a mitochondrion transit peptide. Residues lysine 61, lysine 66, and lysine 80 each carry the N6-acetyllysine; alternate modification. N6-succinyllysine; alternate is present on residues lysine 61, lysine 66, and lysine 80. Phosphothreonine occurs at positions 85 and 90. Lysine 94 is subject to N6-acetyllysine. 2 positions are modified to N6-acetyllysine; alternate: lysine 115 and lysine 122. N6-succinyllysine; alternate is present on residues lysine 115 and lysine 122. Substrate contacts are provided by residues 145–147 (SGT), 176–179 (HPND), and 186–188 (SSN). Lysine 213 carries the post-translational modification N6-acetyllysine. An N6-acetyllysine; alternate modification is found at lysine 223. At lysine 223 the chain carries N6-succinyllysine; alternate. Threonine 234 provides a ligand contact to substrate. Catalysis depends on histidine 235, which acts as the Proton donor/acceptor. Threonine 236 is modified (phosphothreonine). Residue lysine 256 is modified to N6-acetyllysine. Lysine 292 is subject to N6-acetyllysine; alternate. An N6-succinyllysine; alternate modification is found at lysine 292. The active site involves serine 365. Residues serine 366 and 371 to 373 (KVN) each bind substrate. Serine 366 carries the phosphoserine modification. An N6-succinyllysine mark is found at lysine 467 and lysine 473. Position 502 is an N6-acetyllysine (lysine 502).

The protein belongs to the class-II fumarase/aspartase family. Fumarase subfamily. As to quaternary structure, homotetramer. Interacts with H2AZ1. In terms of processing, phosphorylation at Thr-236 by PRKDC in response to DNA damage promotes translocation to the nucleus and recruitment to DNA double-strand breaks (DSBs).

Its subcellular location is the mitochondrion. It localises to the cytoplasm. It is found in the cytosol. The protein localises to the nucleus. The protein resides in the chromosome. It catalyses the reaction (S)-malate = fumarate + H2O. It functions in the pathway carbohydrate metabolism; tricarboxylic acid cycle; (S)-malate from fumarate: step 1/1. Catalyzes the reversible stereospecific interconversion of fumarate to L-malate. Experiments in other species have demonstrated that specific isoforms of this protein act in defined pathways and favor one direction over the other. Its function is as follows. Catalyzes the hydration of fumarate to L-malate in the tricarboxylic acid (TCA) cycle to facilitate a transition step in the production of energy in the form of NADH. Functionally, catalyzes the dehydration of L-malate to fumarate. Fumarate metabolism in the cytosol plays a role during urea cycle and arginine metabolism; fumarate being a by-product of the urea cycle and amino-acid catabolism. Also plays a role in DNA repair by promoting non-homologous end-joining (NHEJ). In response to DNA damage and phosphorylation by PRKDC, translocates to the nucleus and accumulates at DNA double-strand breaks (DSBs): acts by catalyzing formation of fumarate, an inhibitor of KDM2B histone demethylase activity, resulting in enhanced dimethylation of histone H3 'Lys-36' (H3K36me2). This chain is Fumarate hydratase, mitochondrial, found in Macaca fascicularis (Crab-eating macaque).